A 150-amino-acid polypeptide reads, in one-letter code: Major facilitator superfamily domain-containing 14C pseudogene (150 aa).

The segment at 1 to 25 is disordered; the sequence is MSVEPPPELEEKAASEPEAGAMPEK. Over 1–49 the chain is Extracellular; that stretch reads MSVEPPPELEEKAASEPEAGAMPEKRAGAQAAGSTWLQGFGPPSVYHAA. The chain crosses the membrane as a helical span at residues 50–70; that stretch reads IVIFLEFFAWGLLTTPMLTVL. At 71 to 82 the chain is on the cytoplasmic side; it reads HETFSQHTFLMN. A helical transmembrane segment spans residues 83-103; the sequence is GLIQGVKGLLSFLSAPLIGAL. Topologically, residues 104 to 111 are extracellular; sequence SDVWGRKP. The helical transmembrane segment at 112 to 132 threads the bilayer; it reads FLLGTVFFTCFPIPLMRISPC. Topologically, residues 133–150 are cytoplasmic; sequence RVWWRAPVVPATCGRRMA.

This sequence belongs to the major facilitator superfamily.

Its subcellular location is the membrane. The sequence is that of Major facilitator superfamily domain-containing 14C pseudogene from Homo sapiens (Human).